We begin with the raw amino-acid sequence, 595 residues long: Thiol:disulfide interchange protein DsbD (595 aa).

Positions 1-24 are cleaved as a signal peptide; it reads MAQRFITLILLLCSVLLAPHSAQS. The cysteines at positions 134 and 140 are disulfide-linked. Residues 166–186 form a disordered region; that stretch reads NSSATVNPPATTQPEGDATPV. A run of 9 helical transmembrane segments spans residues 197–217, 233–253, 270–290, 311–331, 332–352, 353–373, 384–404, 411–431, and 435–455; these read ALLIGIGIAFTPCVLPMYPLI, ILILAVVYVQGMALTYTLLGL, YVLIGLSVLFVLLALSMFGLY, GGSLAGVFAMGALAGLICSPC, TTAPLSAILLYIAQSGNMLAG, GGTLYLYALGMGIPLVVVTLF, WMQYVKEAFGFVILALPVFLL, VWGLRLWSLLAVAFFGWAFVL, and AHAGWVRVCQLLLLAALLIVA. Residues cysteine 209 and cysteine 331 are joined by a disulfide bond. The 141-residue stretch at 452-592 folds into the Thioredoxin domain; sequence LIVARPLQDW…FLQHLQNTPA (141 aa). Cysteine 507 and cysteine 510 are joined by a disulfide.

Belongs to the thioredoxin family. DsbD subfamily.

The protein localises to the cell inner membrane. The catalysed reaction is [protein]-dithiol + NAD(+) = [protein]-disulfide + NADH + H(+). The enzyme catalyses [protein]-dithiol + NADP(+) = [protein]-disulfide + NADPH + H(+). Required to facilitate the formation of correct disulfide bonds in some periplasmic proteins and for the assembly of the periplasmic c-type cytochromes. Acts by transferring electrons from cytoplasmic thioredoxin to the periplasm. This transfer involves a cascade of disulfide bond formation and reduction steps. This Yersinia pestis bv. Antiqua (strain Nepal516) protein is Thiol:disulfide interchange protein DsbD.